Here is a 283-residue protein sequence, read N- to C-terminus: Phosphatidylserine decarboxylase proenzyme (283 aa).

Residues aspartate 88, histidine 145, and serine 248 each act as charge relay system; for autoendoproteolytic cleavage activity in the active site. Catalysis depends on serine 248, which acts as the Schiff-base intermediate with substrate; via pyruvic acid; for decarboxylase activity. Serine 248 carries the pyruvic acid (Ser); by autocatalysis modification.

The protein belongs to the phosphatidylserine decarboxylase family. PSD-B subfamily. Prokaryotic type I sub-subfamily. As to quaternary structure, heterodimer of a large membrane-associated beta subunit and a small pyruvoyl-containing alpha subunit. The cofactor is pyruvate. In terms of processing, is synthesized initially as an inactive proenzyme. Formation of the active enzyme involves a self-maturation process in which the active site pyruvoyl group is generated from an internal serine residue via an autocatalytic post-translational modification. Two non-identical subunits are generated from the proenzyme in this reaction, and the pyruvate is formed at the N-terminus of the alpha chain, which is derived from the carboxyl end of the proenzyme. The autoendoproteolytic cleavage occurs by a canonical serine protease mechanism, in which the side chain hydroxyl group of the serine supplies its oxygen atom to form the C-terminus of the beta chain, while the remainder of the serine residue undergoes an oxidative deamination to produce ammonia and the pyruvoyl prosthetic group on the alpha chain. During this reaction, the Ser that is part of the protease active site of the proenzyme becomes the pyruvoyl prosthetic group, which constitutes an essential element of the active site of the mature decarboxylase.

It is found in the cell membrane. It catalyses the reaction a 1,2-diacyl-sn-glycero-3-phospho-L-serine + H(+) = a 1,2-diacyl-sn-glycero-3-phosphoethanolamine + CO2. The protein operates within phospholipid metabolism; phosphatidylethanolamine biosynthesis; phosphatidylethanolamine from CDP-diacylglycerol: step 2/2. Functionally, catalyzes the formation of phosphatidylethanolamine (PtdEtn) from phosphatidylserine (PtdSer). The sequence is that of Phosphatidylserine decarboxylase proenzyme from Variovorax paradoxus (strain S110).